Reading from the N-terminus, the 84-residue chain is Acetylcholine receptor subunit alpha (84 aa).

2 disulfides stabilise this stretch: cysteine 7-cysteine 21 and cysteine 71-cysteine 72. Residue asparagine 20 is glycosylated (N-linked (GlcNAc...) asparagine).

Belongs to the ligand-gated ion channel (TC 1.A.9) family. Acetylcholine receptor (TC 1.A.9.1) subfamily. Alpha-1/CHRNA1 sub-subfamily. As to quaternary structure, one of the alpha chains that assemble within the acetylcholine receptor, a pentamer of two alpha chains, a beta, a delta, and a gamma (in immature muscle) or epsilon (in mature muscle) chains. The muscle heteropentamer composed of alpha-1, beta-1, delta, epsilon subunits interacts with the alpha-conotoxin ImII.

The protein localises to the postsynaptic cell membrane. Its subcellular location is the cell membrane. It catalyses the reaction K(+)(in) = K(+)(out). The catalysed reaction is Na(+)(in) = Na(+)(out). Its function is as follows. Upon acetylcholine binding, the AChR responds by an extensive change in conformation that affects all subunits and leads to opening of an ion-conducting channel across the plasma membrane. This Felis catus (Cat) protein is Acetylcholine receptor subunit alpha (CHRNA1).